A 497-amino-acid chain; its full sequence is Serine hydroxymethyltransferase (497 aa).

(6S)-5,6,7,8-tetrahydrofolate-binding positions include L176 and 180–182 (GHL). An N6-(pyridoxal phosphate)lysine modification is found at K289.

This sequence belongs to the SHMT family. As to quaternary structure, homodimer. It depends on pyridoxal 5'-phosphate as a cofactor.

The protein localises to the cytoplasm. The catalysed reaction is (6R)-5,10-methylene-5,6,7,8-tetrahydrofolate + glycine + H2O = (6S)-5,6,7,8-tetrahydrofolate + L-serine. The protein operates within one-carbon metabolism; tetrahydrofolate interconversion. It functions in the pathway amino-acid biosynthesis; glycine biosynthesis; glycine from L-serine: step 1/1. Catalyzes the reversible interconversion of serine and glycine with tetrahydrofolate (THF) serving as the one-carbon carrier. This reaction serves as the major source of one-carbon groups required for the biosynthesis of purines, thymidylate, methionine, and other important biomolecules. Also exhibits THF-independent aldolase activity toward beta-hydroxyamino acids, producing glycine and aldehydes, via a retro-aldol mechanism. The polypeptide is Serine hydroxymethyltransferase (Chlamydia muridarum (strain MoPn / Nigg)).